Consider the following 259-residue polypeptide: MWFLILFLALSLGGIDAAPPGQSRIVGGYKCEKNSQPWQVAIINEYLCGGVLIDPSWVITAAHCYSNYYHVLLGRNNLFEDEPFAQYRFVNQSFPHPDYKPFLMRNHTRQRGDDYSNDLMLLHLSEPADITDGVKVIDLPTEEPKVGSTCLASGWGSTKPLNWELPDDLQCVNIHLLSNEKCIEAYEQKVTDLMLCAGEMDGRKDTCKGDSGGPLICDGVLQGITSWGNVPCAEPYNPGVYTKLIKFTSWIKEVMKENP.

The N-terminal stretch at 1-18 is a signal peptide; sequence MWFLILFLALSLGGIDAA. A propeptide spans 19-24 (activation peptide); it reads PPGQSR. The Peptidase S1 domain maps to 25–256; it reads IVGGYKCEKN…FTSWIKEVMK (232 aa). 5 cysteine pairs are disulfide-bonded: C31-C171, C48-C64, C150-C217, C182-C196, and C207-C232. The Charge relay system role is filled by H63. Residues N91 and N106 are each glycosylated (N-linked (GlcNAc...) asparagine). Catalysis depends on D118, which acts as the Charge relay system. S211 (charge relay system) is an active-site residue.

This sequence belongs to the peptidase S1 family. Kallikrein subfamily. As to quaternary structure, heterodimer of a light chain and heavy chain linked by a disulfide bond. Probably N- and O-glycosylated. In terms of tissue distribution, kidney and submandibular gland, where it is found in the granular convoluted tubule and striated duct cells. It is likely that the enzyme is mainly synthesized in the granular convoluted tubules and then transferred to other tissues by release into the vasculature or interstitial space.

It carries out the reaction Preferential cleavage of Arg-|-Xaa bonds in small molecule substrates. Highly selective action to release kallidin (lysyl-bradykinin) from kininogen involves hydrolysis of Met-|-Xaa or Leu-|-Xaa.. Glandular kallikreins cleave Met-Lys and Arg-Ser bonds in kininogen to release Lys-bradykinin. This protein may be involved in the regulation of renal function. The chain is Glandular kallikrein-10 (Klk10) from Rattus norvegicus (Rat).